We begin with the raw amino-acid sequence, 277 residues long: Large ribosomal subunit protein uL2 (277 aa).

Positions 222–277 (GVAMNPVDHPHGGGEGRTSGGRHPVTPWGKPTKGKKTRSNKATDKFIMRSRHQRKK) are disordered.

It belongs to the universal ribosomal protein uL2 family. As to quaternary structure, part of the 50S ribosomal subunit. Forms a bridge to the 30S subunit in the 70S ribosome.

Its function is as follows. One of the primary rRNA binding proteins. Required for association of the 30S and 50S subunits to form the 70S ribosome, for tRNA binding and peptide bond formation. It has been suggested to have peptidyltransferase activity; this is somewhat controversial. Makes several contacts with the 16S rRNA in the 70S ribosome. The polypeptide is Large ribosomal subunit protein uL2 (Brucella abortus (strain S19)).